We begin with the raw amino-acid sequence, 228 residues long: 7-cyano-7-deazaguanine synthase (228 aa).

Residue 10–20 (FSGGQDSTTLA) participates in ATP binding. Residues C190, C205, C208, and C211 each coordinate Zn(2+).

Belongs to the QueC family. Requires Zn(2+) as cofactor.

It catalyses the reaction 7-carboxy-7-deazaguanine + NH4(+) + ATP = 7-cyano-7-deazaguanine + ADP + phosphate + H2O + H(+). The protein operates within purine metabolism; 7-cyano-7-deazaguanine biosynthesis. Functionally, catalyzes the ATP-dependent conversion of 7-carboxy-7-deazaguanine (CDG) to 7-cyano-7-deazaguanine (preQ(0)). This Helicobacter pylori (strain HPAG1) protein is 7-cyano-7-deazaguanine synthase.